The primary structure comprises 447 residues: Tubulin beta chain (447 aa).

8 residues coordinate GTP: glutamine 11, glutamate 69, serine 138, glycine 142, threonine 143, glycine 144, asparagine 204, and asparagine 226. Mg(2+) is bound at residue glutamate 69. Residues glutamine 424–glutamate 447 form a disordered region. Over residues glycine 429–glutamate 447 the composition is skewed to acidic residues.

It belongs to the tubulin family. In terms of assembly, dimer of alpha and beta chains. A typical microtubule is a hollow water-filled tube with an outer diameter of 25 nm and an inner diameter of 15 nM. Alpha-beta heterodimers associate head-to-tail to form protofilaments running lengthwise along the microtubule wall with the beta-tubulin subunit facing the microtubule plus end conferring a structural polarity. Microtubules usually have 13 protofilaments but different protofilament numbers can be found in some organisms and specialized cells. Requires Mg(2+) as cofactor.

The protein localises to the cytoplasm. Its subcellular location is the cytoskeleton. Functionally, tubulin is the major constituent of microtubules, a cylinder consisting of laterally associated linear protofilaments composed of alpha- and beta-tubulin heterodimers. Microtubules grow by the addition of GTP-tubulin dimers to the microtubule end, where a stabilizing cap forms. Below the cap, tubulin dimers are in GDP-bound state, owing to GTPase activity of alpha-tubulin. The polypeptide is Tubulin beta chain (tub-2) (Neurospora crassa (strain ATCC 24698 / 74-OR23-1A / CBS 708.71 / DSM 1257 / FGSC 987)).